Consider the following 57-residue polypeptide: Protein GnsB (57 aa).

It belongs to the gns family.

Functionally, overexpression increases levels of unsaturated fatty acids and suppresses both the temperature-sensitive fabA6 mutation and cold-sensitive secG null mutation. The chain is Protein GnsB (gnsB) from Escherichia coli (strain K12).